A 337-amino-acid polypeptide reads, in one-letter code: 5-formaminoimidazole-4-carboxamide-1-(beta)-D-ribofuranosyl 5'-monophosphate synthetase (337 aa).

5-amino-1-(5-phospho-beta-D-ribosyl)imidazole-4-carboxamide contacts are provided by His9 and Ser73. Residues Lys94 to Arg324 enclose the ATP-grasp domain. ATP-binding positions include Pro124–Tyr184 and Glu206. Asn234 serves as a coordination point for 5-amino-1-(5-phospho-beta-D-ribosyl)imidazole-4-carboxamide. Mg(2+)-binding residues include Glu273 and Glu286.

This sequence belongs to the phosphohexose mutase family. Requires Mg(2+) as cofactor. Mn(2+) serves as cofactor.

The catalysed reaction is 5-amino-1-(5-phospho-beta-D-ribosyl)imidazole-4-carboxamide + formate + ATP = 5-formamido-1-(5-phospho-D-ribosyl)imidazole-4-carboxamide + ADP + phosphate. Its pathway is purine metabolism; IMP biosynthesis via de novo pathway; 5-formamido-1-(5-phospho-D-ribosyl)imidazole-4-carboxamide from 5-amino-1-(5-phospho-D-ribosyl)imidazole-4-carboxamide (formate route): step 1/1. Its function is as follows. Catalyzes the ATP- and formate-dependent formylation of 5-aminoimidazole-4-carboxamide-1-beta-d-ribofuranosyl 5'-monophosphate (AICAR) to 5-formaminoimidazole-4-carboxamide-1-beta-d-ribofuranosyl 5'-monophosphate (FAICAR) in the absence of folates. The polypeptide is 5-formaminoimidazole-4-carboxamide-1-(beta)-D-ribofuranosyl 5'-monophosphate synthetase (Saccharolobus solfataricus (strain ATCC 35092 / DSM 1617 / JCM 11322 / P2) (Sulfolobus solfataricus)).